Reading from the N-terminus, the 341-residue chain is Putative NADPH-dependent methylglyoxal reductase GRP2 (341 aa).

Positions 40 and 171 each coordinate NADP(+).

Belongs to the NAD(P)-dependent epimerase/dehydratase family. Dihydroflavonol-4-reductase subfamily.

It is found in the cytoplasm. It carries out the reaction (S)-lactaldehyde + NADP(+) = methylglyoxal + NADPH + H(+). In terms of biological role, catalyzes the irreversible reduction of the cytotoxic compound methylglyoxal (MG, 2-oxopropanal) to (S)-lactaldehyde. MG is synthesized via a bypath of glycolysis from dihydroxyacetone phosphate and is believed to play a role in cell cycle regulation and stress adaptation. In Candida albicans (strain SC5314 / ATCC MYA-2876) (Yeast), this protein is Putative NADPH-dependent methylglyoxal reductase GRP2 (GRP2).